A 130-amino-acid polypeptide reads, in one-letter code: Ribonuclease P protein component 2 (130 aa).

It belongs to the eukaryotic/archaeal RNase P protein component 2 family. In terms of assembly, consists of a catalytic RNA component and at least 4-5 protein subunits.

The protein resides in the cytoplasm. The catalysed reaction is Endonucleolytic cleavage of RNA, removing 5'-extranucleotides from tRNA precursor.. Functionally, part of ribonuclease P, a protein complex that generates mature tRNA molecules by cleaving their 5'-ends. The chain is Ribonuclease P protein component 2 from Methanococcus maripaludis (strain C6 / ATCC BAA-1332).